The sequence spans 275 residues: Phosphate import ATP-binding protein PstB 1 (275 aa).

The ABC transporter domain maps to 22–261 (FNVEGVKVYY…SPTEQMFNSP (240 aa)). 54-61 (GPSGCGKS) serves as a coordination point for ATP.

It belongs to the ABC transporter superfamily. Phosphate importer (TC 3.A.1.7) family. As to quaternary structure, the complex is composed of two ATP-binding proteins (PstB), two transmembrane proteins (PstC and PstA) and a solute-binding protein (PstS).

The protein localises to the cell inner membrane. It catalyses the reaction phosphate(out) + ATP + H2O = ADP + 2 phosphate(in) + H(+). In terms of biological role, part of the ABC transporter complex PstSACB involved in phosphate import. Responsible for energy coupling to the transport system. The sequence is that of Phosphate import ATP-binding protein PstB 1 from Trichormus variabilis (strain ATCC 29413 / PCC 7937) (Anabaena variabilis).